A 344-amino-acid chain; its full sequence is N-acetyl-gamma-glutamyl-phosphate reductase (344 aa).

C148 is an active-site residue.

Belongs to the NAGSA dehydrogenase family. Type 1 subfamily.

It localises to the cytoplasm. It catalyses the reaction N-acetyl-L-glutamate 5-semialdehyde + phosphate + NADP(+) = N-acetyl-L-glutamyl 5-phosphate + NADPH + H(+). The protein operates within amino-acid biosynthesis; L-arginine biosynthesis; N(2)-acetyl-L-ornithine from L-glutamate: step 3/4. Catalyzes the NADPH-dependent reduction of N-acetyl-5-glutamyl phosphate to yield N-acetyl-L-glutamate 5-semialdehyde. This Geobacillus kaustophilus (strain HTA426) protein is N-acetyl-gamma-glutamyl-phosphate reductase.